Consider the following 252-residue polypeptide: Type I iodothyronine deiodinase (252 aa).

Topologically, residues 1 to 17 (MESLLQTIKLMLRYIQK) are extracellular. A helical; Signal-anchor for type III membrane protein membrane pass occupies residues 18-38 (ALILFFLFLYVVVGKVLMFLF). Residues 39–252 (PQTMASVLKS…EVCSVLEKKK (214 aa)) lie on the Cytoplasmic side of the membrane. Residue selenocysteine 130 is part of the active site. Selenocysteine 130 is a non-standard amino acid (selenocysteine).

The protein belongs to the iodothyronine deiodinase family. In terms of assembly, predominantly monomer. Can form homodimers but homodimerization is not essential for enzyme activity.

It localises to the cell membrane. It is found in the endoplasmic reticulum membrane. The protein localises to the basolateral cell membrane. The catalysed reaction is 3,3',5-triiodo-L-thyronine + iodide + A + H(+) = L-thyroxine + AH2. It carries out the reaction 3,3',5'-triiodo-L-thyronine + iodide + A + H(+) = L-thyroxine + AH2. It catalyses the reaction 3,3'-diiodo-L-thyronine + iodide + A + H(+) = 3,3',5'-triiodo-L-thyronine + AH2. The enzyme catalyses 3,3'-diiodo-L-thyronine + iodide + A + H(+) = 3,3',5-triiodo-L-thyronine + AH2. The catalysed reaction is 3'-iodo-L-thyronine + iodide + A + H(+) = 3',5'-diiodo-L-thyronine + AH2. It carries out the reaction 3-iodo-L-thyronine + iodide + A + H(+) = 3,5-diiodo-L-thyronine + AH2. It catalyses the reaction 3-iodo-L-thyronine + iodide + A + H(+) = 3,3'-diiodo-L-thyronine + AH2. The enzyme catalyses 3,3'-diiodothyronamine + iodide + A + H(+) = 3,3',5'-triiodothyronamine + AH2. The catalysed reaction is 3'-iodothyronamine + iodide + A + H(+) = 3',5'-diiodothyronamine + AH2. It carries out the reaction 3-iodothyronamine + iodide + A + H(+) = 3,3'-diiodothyronamine + AH2. It catalyses the reaction 3,3'-diiodothyronamine + iodide + A + H(+) = 3,3',5-triiodothyronamine + AH2. The enzyme catalyses 3-iodothyronamine + iodide + A + H(+) = 3,5-diiodothyronamine + AH2. The catalysed reaction is 3,3'-diiodo-L-thyronine sulfate + iodide + A + H(+) = 3,3',5'-triiodo-L-thyronine sulfate + AH2. It carries out the reaction 3,3',5'-triiodo-L-thyronine sulfate + iodide + A + H(+) = L-thyroxine sulfate + AH2. It catalyses the reaction 3,3'-diiodo-L-thyronine sulfate + iodide + A + H(+) = 3,3',5-triiodo-L-thyronine sulfate + AH2. With respect to regulation, lacks sensitivity to 6-n-propylthiouracil. Its function is as follows. Plays a crucial role in the metabolism of thyroid hormones (TH) and has specific roles in TH activation and inactivation by deiodination. Catalyzes the deiodination of L-thyroxine (T4) to 3,5,3'-triiodothyronine (T3) and 3,3',5'-triiodothyronine (rT3) to 3,3'-diiodothyronine (3,3'-T2) via outer-ring deiodination (ORD). Catalyzes the deiodiantion of T4 to rT3 and T3 to 3,3'-T2 via inner-ring deiodination (IRD). Catalyzes the deiodination of 3',5'-diiodothyronine (3',5'-T2) to 3'-monoiodothyronine (3'-T1) via ORD. Catalyzes the deiodination of 3,5-diiodothyronine (3,5-T2) to 3-monoiodothyronine (3-T1) and 3,3'-T2 to 3-T1 via IRD. Catalyzes the phenolic ring deiodinations of 3,3',5'-triiodothyronamine, 3',5'-diiodothyronamine and 3,3'-diiodothyronamine as well as tyrosyl ring deiodinations of 3,5,3'-triiodothyronamine and 3,5-diiodothyronamine. Catalyzes the deiodination of L-thyroxine sulfate and 3,3',5-triiodo-L-thyronine sulfate via IRD and of 3,3',5'-triiodo-L-thyronine sulfate via ORD. This chain is Type I iodothyronine deiodinase (dio1), found in Xenopus laevis (African clawed frog).